Reading from the N-terminus, the 175-residue chain is Large ribosomal subunit protein uL10 (175 aa).

Belongs to the universal ribosomal protein uL10 family. Part of the ribosomal stalk of the 50S ribosomal subunit. The N-terminus interacts with L11 and the large rRNA to form the base of the stalk. The C-terminus forms an elongated spine to which L12 dimers bind in a sequential fashion forming a multimeric L10(L12)X complex.

Its function is as follows. Forms part of the ribosomal stalk, playing a central role in the interaction of the ribosome with GTP-bound translation factors. The protein is Large ribosomal subunit protein uL10 of Prochlorococcus marinus (strain NATL1A).